A 394-amino-acid chain; its full sequence is Candidapepsin (394 aa).

Positions 1–23 (MATIFLFTKNVFIALAFALFAQG) are cleaved as a signal peptide. A propeptide spans 24 to 60 (LTIPDGIEKRTDKVVSLDFTVIRKPFNATAHRLIQKR) (activation peptide). An N-linked (GlcNAc...) asparagine glycan is attached at asparagine 50. Residues 74 to 381 (YAADIVVGSN…DLDDKTISLA (308 aa)) form the Peptidase A1 domain. Residue aspartate 92 is part of the active site. The cysteines at positions 107 and 119 are disulfide-linked. The active site involves aspartate 278. Residues cysteine 314 and cysteine 347 are joined by a disulfide bond.

It belongs to the peptidase A1 family. Post-translationally, O-glycosylated.

The protein localises to the secreted. It catalyses the reaction Preferential cleavage at the carboxyl of hydrophobic amino acids, but fails to cleave 15-Leu-|-Tyr-16, 16-Tyr-|-Leu-17 and 24-Phe-|-Phe-25 of insulin B chain. Activates trypsinogen, and degrades keratin.. The chain is Candidapepsin (SAPT1) from Candida tropicalis (Yeast).